The chain runs to 275 residues: Ribosomal RNA small subunit methyltransferase A (275 aa).

Residues N19, L21, G46, E71, D94, and N117 each coordinate S-adenosyl-L-methionine.

Belongs to the class I-like SAM-binding methyltransferase superfamily. rRNA adenine N(6)-methyltransferase family. RsmA subfamily.

It localises to the cytoplasm. The catalysed reaction is adenosine(1518)/adenosine(1519) in 16S rRNA + 4 S-adenosyl-L-methionine = N(6)-dimethyladenosine(1518)/N(6)-dimethyladenosine(1519) in 16S rRNA + 4 S-adenosyl-L-homocysteine + 4 H(+). Specifically dimethylates two adjacent adenosines (A1518 and A1519) in the loop of a conserved hairpin near the 3'-end of 16S rRNA in the 30S particle. May play a critical role in biogenesis of 30S subunits. The sequence is that of Ribosomal RNA small subunit methyltransferase A from Burkholderia pseudomallei (strain 668).